A 122-amino-acid chain; its full sequence is Large ribosomal subunit protein uL14 (122 aa).

It belongs to the universal ribosomal protein uL14 family. As to quaternary structure, part of the 50S ribosomal subunit. Forms a cluster with proteins L3 and L19. In the 70S ribosome, L14 and L19 interact and together make contacts with the 16S rRNA in bridges B5 and B8.

Functionally, binds to 23S rRNA. Forms part of two intersubunit bridges in the 70S ribosome. In Burkholderia lata (strain ATCC 17760 / DSM 23089 / LMG 22485 / NCIMB 9086 / R18194 / 383), this protein is Large ribosomal subunit protein uL14.